The chain runs to 205 residues: Small ribosomal subunit protein uS4 (205 aa).

The tract at residues N18–S46 is disordered. The S4 RNA-binding domain maps to S94 to E155.

Belongs to the universal ribosomal protein uS4 family. As to quaternary structure, part of the 30S ribosomal subunit. Contacts protein S5. The interaction surface between S4 and S5 is involved in control of translational fidelity.

One of the primary rRNA binding proteins, it binds directly to 16S rRNA where it nucleates assembly of the body of the 30S subunit. Functionally, with S5 and S12 plays an important role in translational accuracy. In Phenylobacterium zucineum (strain HLK1), this protein is Small ribosomal subunit protein uS4.